The primary structure comprises 500 residues: Formate-nitrite transporter 3 (500 aa).

Topologically, residues 1-31 (MVLAASPEAYRKVIEYGIKKTKLRIDRLFLQ) are cytoplasmic. The helical transmembrane segment at 32–52 (AIMAGIYVGMAGHACTALAGA) threads the bilayer. Residues 53 to 69 (YSTDPANPLAVSKATQK) lie on the Extracellular side of the membrane. The helical transmembrane segment at 70 to 90 (FLYASLFPVAFIAIIFTGAEL) threads the bilayer. Topologically, residues 91-113 (FTGNTMTMLVCLLERRVTALQLC) are cytoplasmic. The chain crosses the membrane as a helical span at residues 114–134 (INWICSLVGNWAGALFAAYFL). The Extracellular segment spans residues 135 to 164 (SYLPGVLQDPDHLHYLEDVAAHKTELSFLQ). A helical membrane pass occupies residues 165–185 (CFCLAVGCNTFVCLAVWFVIA). The Cytoplasmic portion of the chain corresponds to 186-192 (SDDAAGK). The chain crosses the membrane as a helical span at residues 193-213 (IMSMWFPIVSFCVAGYEHIIA). The Extracellular segment spans residues 214–237 (NFYTLQCALMHGVGPGVGTVILKN). The chain crosses the membrane as a helical span at residues 238-258 (FIPTLLGNIVGGCGLVGAVYW). Residues 259-500 (YNFYPTVCVV…ALEEHPASTI (242 aa)) lie on the Cytoplasmic side of the membrane. A disordered region spans residues 411-500 (PLRENSGVPS…ALEEHPASTI (90 aa)). Composition is skewed to basic and acidic residues over residues 428–444 (GRVR…RGGE) and 466–485 (FHPH…ETRV).

This sequence belongs to the FNT transporter (TC 1.A.16) family. Homopentamer.

It is found in the cell membrane. The catalysed reaction is (S)-lactate(in) + H(+)(in) = (S)-lactate(out) + H(+)(out). It carries out the reaction formate(in) + H(+)(in) = formate(out) + H(+)(out). The enzyme catalyses pyruvate(out) + H(+)(out) = pyruvate(in) + H(+)(in). It catalyses the reaction acetate(out) + H(+)(out) = acetate(in) + H(+)(in). With respect to regulation, inhibited by p-chloromercuribenzene sulfonate (pCMBS). Methyl methanethiosulfonate (MMTS) inhibits L-lactate but not formate transport. Inhibited by the Malaria Box compound MMV007839. Inhibited by BH-296, BH-317, BH-326 and BH-388 compounds. Its function is as follows. Monocarboxylate-proton symporter; active in acidic-to-neutral pH range. Transports L-lactate and formate. The chain is Formate-nitrite transporter 3 from Toxoplasma gondii (strain ATCC 50611 / Me49).